Here is a 598-residue protein sequence, read N- to C-terminus: Chaperone protein DnaK (598 aa).

The residue at position 180 (Thr-180) is a Phosphothreonine; by autocatalysis.

This sequence belongs to the heat shock protein 70 family.

Acts as a chaperone. The sequence is that of Chaperone protein DnaK from Thermosipho africanus (strain TCF52B).